We begin with the raw amino-acid sequence, 320 residues long: Formimidoylglutamase (320 aa).

Mn(2+) contacts are provided by H125, D153, H155, D157, D244, and D246.

It belongs to the arginase family. The cofactor is Mn(2+).

The catalysed reaction is N-formimidoyl-L-glutamate + H2O = formamide + L-glutamate. It functions in the pathway amino-acid degradation; L-histidine degradation into L-glutamate; L-glutamate from N-formimidoyl-L-glutamate (hydrolase route): step 1/1. In terms of biological role, catalyzes the conversion of N-formimidoyl-L-glutamate to L-glutamate and formamide. This is Formimidoylglutamase from Rhodococcus jostii (strain RHA1).